The chain runs to 412 residues: Multifunctional CCA protein (412 aa).

2 residues coordinate ATP: Gly-8 and Arg-11. CTP-binding residues include Gly-8 and Arg-11. The Mg(2+) site is built by Glu-21 and Asp-23. ATP-binding residues include Arg-92, Arg-138, and Arg-141. Positions 92, 138, and 141 each coordinate CTP. In terms of domain architecture, HD spans 227–328; the sequence is TGIHTMMTVA…IKLFYAIDVW (102 aa).

Belongs to the tRNA nucleotidyltransferase/poly(A) polymerase family. Bacterial CCA-adding enzyme type 1 subfamily. Monomer. Can also form homodimers and oligomers. The cofactor is Mg(2+). Requires Ni(2+) as cofactor.

The catalysed reaction is a tRNA precursor + 2 CTP + ATP = a tRNA with a 3' CCA end + 3 diphosphate. It catalyses the reaction a tRNA with a 3' CCA end + 2 CTP + ATP = a tRNA with a 3' CCACCA end + 3 diphosphate. Catalyzes the addition and repair of the essential 3'-terminal CCA sequence in tRNAs without using a nucleic acid template. Adds these three nucleotides in the order of C, C, and A to the tRNA nucleotide-73, using CTP and ATP as substrates and producing inorganic pyrophosphate. tRNA 3'-terminal CCA addition is required both for tRNA processing and repair. Also involved in tRNA surveillance by mediating tandem CCA addition to generate a CCACCA at the 3' terminus of unstable tRNAs. While stable tRNAs receive only 3'-terminal CCA, unstable tRNAs are marked with CCACCA and rapidly degraded. This chain is Multifunctional CCA protein, found in Baumannia cicadellinicola subsp. Homalodisca coagulata.